Here is a 303-residue protein sequence, read N- to C-terminus: uncharacterized protein (303 aa).

This is an uncharacterized protein from Rickettsia prowazekii (strain Madrid E).